Here is a 296-residue protein sequence, read N- to C-terminus: MTKEKIIVIVGPTAVGKTALGIALAGAFNGEIISGDSQQVYRHLDIGTAKASAREQALAVHHLIDIREVTESYSAFDFVQDAKRAIEDIVSRGKLPIIVGGTGLYLQSLLEGYHLGGDLDQKELLAYRQQLETLTDTELYQLLASKGIHLDQVNRRRAIRSLELNQFARDLENQEAPYNPLIIGLTDEREVIYERINKRVDLMMASGLLEEARWLFEQYPAVQASRGIGYKELFPYFQGQASLEEATATLKQQTRRFAKRQLTWFRNRMAVRFDSISESSYPQAIYDRVERFLKEP.

Residue 11-18 (GPTAVGKT) participates in ATP binding. 13–18 (TAVGKT) contacts substrate. The segment at 36-39 (DSQQ) is interaction with substrate tRNA.

Belongs to the IPP transferase family. Monomer. Mg(2+) is required as a cofactor.

The enzyme catalyses adenosine(37) in tRNA + dimethylallyl diphosphate = N(6)-dimethylallyladenosine(37) in tRNA + diphosphate. In terms of biological role, catalyzes the transfer of a dimethylallyl group onto the adenine at position 37 in tRNAs that read codons beginning with uridine, leading to the formation of N6-(dimethylallyl)adenosine (i(6)A). This chain is tRNA dimethylallyltransferase, found in Streptococcus equi subsp. equi (strain 4047).